A 400-amino-acid polypeptide reads, in one-letter code: Trans-enoyl reductase ucsL (400 aa).

NADP(+) is bound at residue 50–53 (TDHK). 145–152 (SVHGSVAL) is a binding site for substrate. NADP(+) contacts are provided by residues 204–207 (STAC), 227–230 (SPRN), Tyr245, and 292–293 (LE). 313–317 (GPVMF) provides a ligand contact to substrate. 389-390 (VS) lines the NADP(+) pocket.

It belongs to the zinc-containing alcohol dehydrogenase family. In terms of assembly, monomer.

It participates in mycotoxin biosynthesis. In terms of biological role, trans-enoyl reductase; part of the gene cluster that mediates the biosynthesis of UCS1025A, a member of the pyrrolizidinone family that acts as a strong telomerase inhibitor and displays potent antibacterial and antitumor properties. These compounds share a hemiaminal-containing pyrrolizidinone core fused with a gamma-lactone, giving a furopyrrolizidine that is connected to a decalin fragment. The polyketide synthase module (PKS) of the PKS-NRPS ucsA is responsible for the synthesis of the polyketide backbone via the condensation of an acetyl-CoA starter unit with 6 malonyl-CoA units. The downstream nonribosomal peptide synthetase (NRPS) module then amidates the carboxyl end of the polyketide with a 2S,3S-methylproline derived from L-isoleucine by the 2-oxoglutarate-dependent dioxygenase ucsF which converts L-isoleucine to (4S,5S)-4-methylpyrroline-5-carboxylate that is further converted to 2S,3S-methylproline by the pyrroline-5-carboxylate reductase ucsG. Reductive release of the completed aminoacyl polyketide from the assembly line can form the 3-pyrrolin-2-one structure via an intramolecular Knoevenagel reaction. Because ucsA lacks a designated enoylreductase (ER) domain, the required activity is provided the enoyl reductase ucsL. This keto acyclic precursor is the substrate of the Diels-Alderase ucsH, that catalyzes the Diels-Alder cycloaddition. Oxidation of the 3S-methyl group to a carboxylate by the cytochrome P450 monooxygenase ucsK allows an oxa-Michael cyclization that might involve the reductase/dehydrogenase ucsI and which furnishes the furopyrrolizidine. The oxidase ucsJ likely plays a critical role in stereoselective reduction of the C5-C6 double bond to afford the required R-configured carboxylate group. Further enolization and oxidation at C5 by an unidentified enzyme affords the last intermediate that can undergo oxa-Michael cyclization to yield UCS1025A. In Acremonium sp, this protein is Trans-enoyl reductase ucsL.